The sequence spans 349 residues: GMP reductase (349 aa).

Position 108 to 131 (I108 to A131) interacts with NADP(+). K(+)-binding residues include G181 and G183. C186 serves as the catalytic Thioimidate intermediate. I216–V239 contributes to the NADP(+) binding site.

The protein belongs to the IMPDH/GMPR family. GuaC type 1 subfamily. In terms of assembly, homotetramer.

The catalysed reaction is IMP + NH4(+) + NADP(+) = GMP + NADPH + 2 H(+). Its function is as follows. Catalyzes the irreversible NADPH-dependent deamination of GMP to IMP. It functions in the conversion of nucleobase, nucleoside and nucleotide derivatives of G to A nucleotides, and in maintaining the intracellular balance of A and G nucleotides. This chain is GMP reductase, found in Buchnera aphidicola subsp. Acyrthosiphon pisum (strain Tuc7).